A 125-amino-acid polypeptide reads, in one-letter code: Small ribosomal subunit protein bS16 (125 aa).

The tract at residues 87–125 is disordered; it reads EGKKKQALARQSASKKAVKEKTEESKGSEVDSETSTSAD. A compositionally biased stretch (basic and acidic residues) spans 103-115; sequence AVKEKTEESKGSE.

It belongs to the bacterial ribosomal protein bS16 family.

The protein is Small ribosomal subunit protein bS16 of Prochlorococcus marinus (strain MIT 9211).